The chain runs to 442 residues: Ribosomal protein uS12 methylthiotransferase RimO (442 aa).

The region spanning 8 to 118 (PKVGFVSLGC…VLGHVHKYVA (111 aa)) is the MTTase N-terminal domain. [4Fe-4S] cluster-binding residues include C17, C53, C82, C150, C154, and C157. The Radical SAM core domain maps to 136–373 (LTPRHYAYLK…MELQQQVSIR (238 aa)). Residues 376-442 (ARKVGKEMTV…EYDLWASLIG (67 aa)) enclose the TRAM domain.

It belongs to the methylthiotransferase family. RimO subfamily. [4Fe-4S] cluster serves as cofactor.

The protein localises to the cytoplasm. It carries out the reaction L-aspartate(89)-[ribosomal protein uS12]-hydrogen + (sulfur carrier)-SH + AH2 + 2 S-adenosyl-L-methionine = 3-methylsulfanyl-L-aspartate(89)-[ribosomal protein uS12]-hydrogen + (sulfur carrier)-H + 5'-deoxyadenosine + L-methionine + A + S-adenosyl-L-homocysteine + 2 H(+). In terms of biological role, catalyzes the methylthiolation of an aspartic acid residue of ribosomal protein uS12. This is Ribosomal protein uS12 methylthiotransferase RimO from Aeromonas salmonicida (strain A449).